Reading from the N-terminus, the 43-residue chain is Large ribosomal subunit protein uL11 (43 aa).

Belongs to the universal ribosomal protein uL11 family. As to quaternary structure, part of the ribosomal stalk of the 50S ribosomal subunit. Interacts with L10 and the large rRNA to form the base of the stalk. L10 forms an elongated spine to which L12 dimers bind in a sequential fashion forming a multimeric L10(L12)X complex. In terms of processing, one or more lysine residues are methylated.

In terms of biological role, forms part of the ribosomal stalk which helps the ribosome interact with GTP-bound translation factors. In Streptomyces galbus, this protein is Large ribosomal subunit protein uL11 (rplK).